A 158-amino-acid polypeptide reads, in one-letter code: Cyclic pyranopterin monophosphate synthase (158 aa).

Residues 75 to 77 (LCH) and 113 to 114 (ME) contribute to the substrate site. D128 is an active-site residue.

The protein belongs to the MoaC family. In terms of assembly, homohexamer; trimer of dimers.

The enzyme catalyses (8S)-3',8-cyclo-7,8-dihydroguanosine 5'-triphosphate = cyclic pyranopterin phosphate + diphosphate. Its pathway is cofactor biosynthesis; molybdopterin biosynthesis. In terms of biological role, catalyzes the conversion of (8S)-3',8-cyclo-7,8-dihydroguanosine 5'-triphosphate to cyclic pyranopterin monophosphate (cPMP). In Histophilus somni (strain 2336) (Haemophilus somnus), this protein is Cyclic pyranopterin monophosphate synthase.